The sequence spans 292 residues: Hydroxysqualene synthase (292 aa).

The protein belongs to the phytoene/squalene synthase family. HpnC subfamily.

The enzyme catalyses presqualene diphosphate + H2O = hydroxysqualene + diphosphate. The protein operates within secondary metabolite biosynthesis; hopanoid biosynthesis. Functionally, involved in the biosynthesis of the hopanoid precursor squalene (SQ) from farnesyl diphosphate (FPP). Catalyzes the second step, the conversion of presqualene diphosphate (PSPP) to hydroxysqualene (HSQ). This chain is Hydroxysqualene synthase, found in Rhodopseudomonas palustris (strain ATCC BAA-98 / CGA009).